Here is a 1203-residue protein sequence, read N- to C-terminus: Cingulin (1203 aa).

Positions 7 to 357 (MAEPRGPVDH…VMVSSGSTKA (351 aa)) are head. Residues 25-48 (EPVSGAEMGTLRRGGRRPAKDARA) are disordered. Positions 48–62 (ASTYGVAVRVQGIAG) match the ZIM motif. Residues 54 to 67 (AVRVQGIAGQPFVV) are interaction with TJP1/ZO1. The tract at residues 89-127 (GASGALSSDLELPENPYSQVKGFPAPSQSSTSDEEPGAY) is disordered. Serine 95, serine 96, serine 135, serine 137, serine 140, serine 155, serine 165, serine 214, serine 217, serine 258, serine 276, serine 338, and serine 351 each carry phosphoserine. Residues 186 to 266 (DSQLGGQARG…LSPLSGFSRS (81 aa)) form a disordered region. Residues 207–231 (EQRKRSKSLDSRLPRDTFEERERQS) are compositionally biased toward basic and acidic residues. The span at 232 to 266 (TNHWTSSTKYDNHVGTSKQPAQSQNLSPLSGFSRS) shows a compositional bias: polar residues. Residues 358 to 1160 (VAGQGELTRK…SLEKDSWRKA (803 aa)) are a coiled coil. Lysine 579 carries the post-translational modification N6-acetyllysine. The residue at position 712 (threonine 712) is a Phosphothreonine. Disordered regions lie at residues 1034–1053 (LASSEGFQKPSASLSQLESQ) and 1154–1181 (KDSWRKASRSAAESALKNEGLSSDEEFD). Over residues 1044–1053 (SASLSQLESQ) the composition is skewed to low complexity. A tail region spans residues 1161 to 1203 (SRSAAESALKNEGLSSDEEFDSVYDPSSIASLLTESNLQTSSC). 3 positions are modified to phosphoserine: serine 1175, serine 1176, and serine 1182.

It belongs to the cingulin family. In terms of assembly, homodimer. Interacts with TJP1/ZO1. Interacts with SPEF1. In terms of tissue distribution, localized on the cytoplasmic face of tight junctions of polarized epithelia and some endothelia. Expressed in pancreas, kidney, liver and lung, but not in skeletal muscle, placenta, brain or heart.

Its subcellular location is the cell junction. The protein localises to the tight junction. Its function is as follows. Probably plays a role in the formation and regulation of the tight junction (TJ) paracellular permeability barrier. The chain is Cingulin from Homo sapiens (Human).